The following is a 581-amino-acid chain: Serine/threonine protein phosphatase 2A 55 kDa regulatory subunit B alpha isoform (581 aa).

Residues 1–27 (MMNPDGGDGDRLEAAGAGSSSAQQGHP) form a disordered region. Low complexity predominate over residues 14–25 (AAGAGSSSAQQG). 2 WD repeats span residues 47–86 (QEVD…DNAS) and 123–164 (EIEE…VKQV). Residues 172–189 (RSVGTGTSSSASTSSSRG) show a composition bias toward low complexity. Residues 172–192 (RSVGTGTSSSASTSSSRGLLP) are disordered. WD repeat units follow at residues 241–279 (AHDY…QSFN), 290–330 (DLTE…LCDN), 349–387 (EIIA…GPVS), and 492–530 (DFST…RKFI).

The protein belongs to the phosphatase 2A regulatory subunit B family. In terms of assembly, PP2A consists of a common heteromeric enzyme, composed of a catalytic subunit (subunits C), a constant regulatory subunit (subunit A), and a variety of regulatory subunits such as subunits B (the R2/B/PR55/B55, R3/B''/PR72/PR130/PR59 and R5/B'/B56 families).

In terms of biological role, the B regulatory subunit may modulate substrate selectivity and catalytic activity, and may also direct the localization of the catalytic enzyme to a particular subcellular compartment. This chain is Serine/threonine protein phosphatase 2A 55 kDa regulatory subunit B alpha isoform, found in Oryza sativa subsp. japonica (Rice).